The following is a 151-amino-acid chain: D-ribose pyranase 1 (151 aa).

His20 acts as the Proton donor in catalysis. Substrate is bound by residues Asp28, His98, and 121–123 (WGN).

Belongs to the RbsD / FucU family. RbsD subfamily. Homodecamer.

The protein resides in the cytoplasm. The enzyme catalyses beta-D-ribopyranose = beta-D-ribofuranose. It functions in the pathway carbohydrate metabolism; D-ribose degradation; D-ribose 5-phosphate from beta-D-ribopyranose: step 1/2. In terms of biological role, catalyzes the interconversion of beta-pyran and beta-furan forms of D-ribose. The polypeptide is D-ribose pyranase 1 (Streptomyces griseus subsp. griseus (strain JCM 4626 / CBS 651.72 / NBRC 13350 / KCC S-0626 / ISP 5235)).